A 238-amino-acid polypeptide reads, in one-letter code: Ribonuclease PH (238 aa).

Phosphate is bound by residues Arg-86 and Gly-124–Arg-126.

Belongs to the RNase PH family. As to quaternary structure, homohexameric ring arranged as a trimer of dimers.

The catalysed reaction is tRNA(n+1) + phosphate = tRNA(n) + a ribonucleoside 5'-diphosphate. Functionally, phosphorolytic 3'-5' exoribonuclease that plays an important role in tRNA 3'-end maturation. Removes nucleotide residues following the 3'-CCA terminus of tRNAs; can also add nucleotides to the ends of RNA molecules by using nucleoside diphosphates as substrates, but this may not be physiologically important. Probably plays a role in initiation of 16S rRNA degradation (leading to ribosome degradation) during starvation. The sequence is that of Ribonuclease PH from Haemophilus ducreyi (strain 35000HP / ATCC 700724).